A 102-amino-acid polypeptide reads, in one-letter code: Large ribosomal subunit protein bL21 (102 aa).

It belongs to the bacterial ribosomal protein bL21 family. As to quaternary structure, part of the 50S ribosomal subunit. Contacts protein L20.

This protein binds to 23S rRNA in the presence of protein L20. The protein is Large ribosomal subunit protein bL21 of Ligilactobacillus salivarius (strain UCC118) (Lactobacillus salivarius).